The chain runs to 146 residues: Transcription antitermination protein NusB (146 aa).

Belongs to the NusB family.

In terms of biological role, involved in transcription antitermination. Required for transcription of ribosomal RNA (rRNA) genes. Binds specifically to the boxA antiterminator sequence of the ribosomal RNA (rrn) operons. This chain is Transcription antitermination protein NusB, found in Koribacter versatilis (strain Ellin345).